We begin with the raw amino-acid sequence, 191 residues long: Small ribosomal subunit protein uS7 (191 aa).

The disordered stretch occupies residues 56–80; that stretch reads NKSGEQGDGDGESGGKAGGIKKRSL.

The protein belongs to the universal ribosomal protein uS7 family. In terms of assembly, part of the 30S ribosomal subunit. Contacts proteins S9 and S11.

One of the primary rRNA binding proteins, it binds directly to 16S rRNA where it nucleates assembly of the head domain of the 30S subunit. Is located at the subunit interface close to the decoding center, probably blocks exit of the E-site tRNA. The chain is Small ribosomal subunit protein uS7 from Coxiella burnetii (strain CbuK_Q154) (Coxiella burnetii (strain Q154)).